Consider the following 377-residue polypeptide: Guanine nucleotide-binding protein subunit alpha-13 (377 aa).

2 S-palmitoyl cysteine lipidation sites follow: C14 and C18. One can recognise a G-alpha domain in the interval 47-377 (RLVKILLLGA…HDNLKQLMLQ (331 aa)). The segment at 50–63 (KILLLGAGESGKST) is G1 motif. GTP-binding positions include 58–63 (ESGKST), S173, and 197–200 (LLAR). Residue S62 participates in Mg(2+) binding. Residues 195 to 203 (DILLARRPT) form a G2 motif region. T203 provides a ligand contact to Mg(2+). A Phosphothreonine; by PKA modification is found at T203. A G3 motif region spans residues 218-227 (FKMVDVGGQR). The G4 motif stretch occupies residues 287-294 (ILFLNKTD). GTP-binding positions include 291 to 294 (NKTD) and A349. A G5 motif region spans residues 347–352 (TTAINT).

This sequence belongs to the G-alpha family. G(12) subfamily. As to quaternary structure, g proteins are composed of 3 units; alpha, beta and gamma. The alpha chain contains the guanine nucleotide binding site. Interacts with UBXD5. Interacts with HAX1. Interacts (in GTP-bound form) with PPP5C (via TPR repeats); activates PPP5C phosphatase activity and translocates PPP5C to the cell membrane. Interacts with RGS22. Interacts with ARHGEF1. Interacts (in GTP-bound form) with ARHGEF11 (via RGS domain). Interacts (in GTP-bound form) with ARHGEF12 (via RGS domain). Interacts (in GTP-bound form) with CTNND1. Interacts with GAS2L2. Interacts with GPR35. Interacts with GPR174. Palmitoylation is critical for proper membrane localization and signaling. In terms of processing, phosphorylation on Thr-203 by PKA destabilizes the heterotrimer of alpha, beta and gamma, and inhibits Rho activation.

Its subcellular location is the membrane. The protein resides in the melanosome. It localises to the cytoplasm. The protein localises to the nucleus. Guanine nucleotide-binding proteins (G proteins) are involved as modulators or transducers in various transmembrane signaling systems. Activates effector molecule RhoA by binding and activating RhoGEFs (ARHGEF1/p115RhoGEF, ARHGEF11/PDZ-RhoGEF and ARHGEF12/LARG). GNA13-dependent Rho signaling subsequently regulates transcription factor AP-1 (activating protein-1). Promotes tumor cell invasion and metastasis by activating RhoA/ROCK signaling pathway. Inhibits CDH1-mediated cell adhesion in process independent from Rho activation. In lymphoid follicles, transmits P2RY8- and S1PR2-dependent signals that lead to inhibition of germinal center (GC) B cell growth and migration outside the GC niche. The polypeptide is Guanine nucleotide-binding protein subunit alpha-13 (Gna13) (Rattus norvegicus (Rat)).